Consider the following 239-residue polypeptide: Fatty acid metabolism regulator protein (239 aa).

Positions 6–74 (KGPASFAEKY…HGKPTQVNNF (69 aa)) constitute an HTH gntR-type domain. Residues 34-53 (ERELSELIGVTRTTLREVLQ) constitute a DNA-binding region (H-T-H motif).

Homodimer.

The protein localises to the cytoplasm. Functionally, multifunctional regulator of fatty acid metabolism. The polypeptide is Fatty acid metabolism regulator protein (Shewanella frigidimarina (strain NCIMB 400)).